We begin with the raw amino-acid sequence, 513 residues long: ATP synthase subunit alpha (513 aa).

169–176 lines the ATP pocket; the sequence is GDRQTGKT.

This sequence belongs to the ATPase alpha/beta chains family. In terms of assembly, F-type ATPases have 2 components, CF(1) - the catalytic core - and CF(0) - the membrane proton channel. CF(1) has five subunits: alpha(3), beta(3), gamma(1), delta(1), epsilon(1). CF(0) has three main subunits: a(1), b(2) and c(9-12). The alpha and beta chains form an alternating ring which encloses part of the gamma chain. CF(1) is attached to CF(0) by a central stalk formed by the gamma and epsilon chains, while a peripheral stalk is formed by the delta and b chains.

It is found in the cell inner membrane. The enzyme catalyses ATP + H2O + 4 H(+)(in) = ADP + phosphate + 5 H(+)(out). In terms of biological role, produces ATP from ADP in the presence of a proton gradient across the membrane. The alpha chain is a regulatory subunit. In Polynucleobacter necessarius subsp. necessarius (strain STIR1), this protein is ATP synthase subunit alpha.